The following is a 616-amino-acid chain: Chaperone protein HscA (616 aa).

It belongs to the heat shock protein 70 family.

Functionally, chaperone involved in the maturation of iron-sulfur cluster-containing proteins. Has a low intrinsic ATPase activity which is markedly stimulated by HscB. Involved in the maturation of IscU. In Photorhabdus laumondii subsp. laumondii (strain DSM 15139 / CIP 105565 / TT01) (Photorhabdus luminescens subsp. laumondii), this protein is Chaperone protein HscA.